The following is a 360-amino-acid chain: Peptide chain release factor 1 (360 aa).

An N5-methylglutamine modification is found at Gln-234.

The protein belongs to the prokaryotic/mitochondrial release factor family. Methylated by PrmC. Methylation increases the termination efficiency of RF1.

Its subcellular location is the cytoplasm. Its function is as follows. Peptide chain release factor 1 directs the termination of translation in response to the peptide chain termination codons UAG and UAA. This Clostridium botulinum (strain Alaska E43 / Type E3) protein is Peptide chain release factor 1.